Reading from the N-terminus, the 97-residue chain is MSNISKETVEKVANLAKLEVSETEATAFAGQLGKIIELVEQLNTLDTTNVEPTSHAIDVSNVLREDVATKGLDRKEVLKNAPDEQDGMFKVPTIMEQ.

This sequence belongs to the GatC family. As to quaternary structure, heterotrimer of A, B and C subunits.

The catalysed reaction is L-glutamyl-tRNA(Gln) + L-glutamine + ATP + H2O = L-glutaminyl-tRNA(Gln) + L-glutamate + ADP + phosphate + H(+). It carries out the reaction L-aspartyl-tRNA(Asn) + L-glutamine + ATP + H2O = L-asparaginyl-tRNA(Asn) + L-glutamate + ADP + phosphate + 2 H(+). In terms of biological role, allows the formation of correctly charged Asn-tRNA(Asn) or Gln-tRNA(Gln) through the transamidation of misacylated Asp-tRNA(Asn) or Glu-tRNA(Gln) in organisms which lack either or both of asparaginyl-tRNA or glutaminyl-tRNA synthetases. The reaction takes place in the presence of glutamine and ATP through an activated phospho-Asp-tRNA(Asn) or phospho-Glu-tRNA(Gln). This is Aspartyl/glutamyl-tRNA(Asn/Gln) amidotransferase subunit C from Listeria monocytogenes serotype 4b (strain CLIP80459).